We begin with the raw amino-acid sequence, 253 residues long: Tetraspanin-3 (253 aa).

At 1–11 (MGQCGITSSKT) the chain is on the cytoplasmic side. Residues 12–32 (VLVFLNLIFWGAAGILCYVGA) traverse the membrane as a helical segment. At 33 to 50 (YVFITYDDYDHFFEDVYT) the chain is on the extracellular side. Residues 51–71 (LIPAVVIIAVGALLFIIGLIG) form a helical membrane-spanning segment. Over 72 to 85 (CCATIRESRCGLAT) the chain is Cytoplasmic. A helical transmembrane segment spans residues 86 to 106 (FVIILLLVFVTEVVVVVLGYV). Topologically, residues 107-212 (YRAKVENEVD…KKLQEIMMHV (106 aa)) are extracellular. N-linked (GlcNAc...) asparagine glycosylation is found at Asn-127, Asn-152, Asn-167, and Asn-183. The helical transmembrane segment at 213-233 (IWAALAFAAIQLLGMLCACIV) threads the bilayer. Over 234–253 (LCRRSRDPAYELLITGGAYA) the chain is Cytoplasmic.

The protein belongs to the tetraspanin (TM4SF) family. As to quaternary structure, interacts with claudin-11/CLDN11 and integrins.

It localises to the membrane. In terms of biological role, regulates the proliferation and migration of oligodendrocytes, a process essential for normal myelination and repair. The chain is Tetraspanin-3 (TSPAN3) from Bos taurus (Bovine).